The primary structure comprises 471 residues: Light-independent protochlorophyllide reductase subunit N (471 aa).

Residues Cys22, Cys47, and Cys107 each coordinate [4Fe-4S] cluster.

This sequence belongs to the BchN/ChlN family. In terms of assembly, protochlorophyllide reductase is composed of three subunits; ChlL, ChlN and ChlB. Forms a heterotetramer of two ChlB and two ChlN subunits. Requires [4Fe-4S] cluster as cofactor.

It localises to the plastid. The protein resides in the chloroplast. The enzyme catalyses chlorophyllide a + oxidized 2[4Fe-4S]-[ferredoxin] + 2 ADP + 2 phosphate = protochlorophyllide a + reduced 2[4Fe-4S]-[ferredoxin] + 2 ATP + 2 H2O. It participates in porphyrin-containing compound metabolism; chlorophyll biosynthesis (light-independent). In terms of biological role, component of the dark-operative protochlorophyllide reductase (DPOR) that uses Mg-ATP and reduced ferredoxin to reduce ring D of protochlorophyllide (Pchlide) to form chlorophyllide a (Chlide). This reaction is light-independent. The NB-protein (ChlN-ChlB) is the catalytic component of the complex. This is Light-independent protochlorophyllide reductase subunit N from Huperzia lucidula (Shining clubmoss).